The following is a 479-amino-acid chain: Transcript termination protein A18 (479 aa).

The Helicase ATP-binding domain occupies 99–255; that stretch reads KNKHKRPTYI…NDIINVSNSL (157 aa). Position 112–119 (112–119) interacts with ATP; the sequence is LACGFGKT. The DESH box motif lies at 205–208; it reads DESH. Residues 308-469 enclose the Helicase C-terminal domain; it reads ILDTIIYDFN…EKKGKKKELA (162 aa).

Belongs to the helicase family. Poxviruses subfamily. In terms of assembly, interacts with G2. Might be part of a transcription complex composed at least of G2, A18, and H5.

It localises to the virion. In terms of biological role, DNA helicase which seems to act as a postreplicative transcription termination factor. Involved in ATP-dependent release of nascent RNA. Forms a stable complex with single-stranded DNA, and to a lesser extent RNA. The protein is Transcript termination protein A18 of Homo sapiens (Human).